Reading from the N-terminus, the 371-residue chain is Alanine dehydrogenase (371 aa).

Residues Arg-15 and Lys-75 each coordinate substrate. His-96 acts as the Proton donor/acceptor in catalysis. NAD(+) contacts are provided by residues Ser-134, 178 to 179 (TA), Asp-198, Lys-203, Ser-220, 239 to 240 (VL), 267 to 270 (IAID), Arg-279, and 298 to 301 (VANM). Asp-270 acts as the Proton donor/acceptor in catalysis. Positions 323 and 327 each coordinate Mg(2+).

This sequence belongs to the AlaDH/PNT family. In terms of assembly, homohexamer. Trimer of dimers. The cofactor is Mg(2+).

The protein localises to the secreted. It carries out the reaction L-alanine + NAD(+) + H2O = pyruvate + NH4(+) + NADH + H(+). Its pathway is amino-acid degradation; L-alanine degradation via dehydrogenase pathway; NH(3) and pyruvate from L-alanine: step 1/1. With respect to regulation, inhibited by CuSO(4) and ZnCl(2). Functionally, catalyzes the reversible reductive amination of pyruvate to L-alanine. However, since the physiological environment of M.tuberculosis has a neutral pH, it can be assumed that the enzyme catalyzes exclusively the formation of L-alanine. May play a role in cell wall synthesis as L-alanine is an important constituent of the peptidoglycan layer. The protein is Alanine dehydrogenase (ald) of Mycobacterium tuberculosis (strain ATCC 25618 / H37Rv).